A 338-amino-acid chain; its full sequence is UPF0324 membrane protein HI_1643 (338 aa).

Transmembrane regions (helical) follow at residues P5–L23, H33–F55, G62–F84, A94–Y116, L123–V145, V155–W177, L222–T239, I254–L273, L280–A302, and P312–I334.

This sequence belongs to the UPF0324 family.

Its subcellular location is the cell membrane. The chain is UPF0324 membrane protein HI_1643 from Haemophilus influenzae (strain ATCC 51907 / DSM 11121 / KW20 / Rd).